A 189-amino-acid chain; its full sequence is Elongation factor P (189 aa).

This sequence belongs to the elongation factor P family.

The protein resides in the cytoplasm. Its pathway is protein biosynthesis; polypeptide chain elongation. Its function is as follows. Involved in peptide bond synthesis. Stimulates efficient translation and peptide-bond synthesis on native or reconstituted 70S ribosomes in vitro. Probably functions indirectly by altering the affinity of the ribosome for aminoacyl-tRNA, thus increasing their reactivity as acceptors for peptidyl transferase. This chain is Elongation factor P, found in Phytoplasma australiense.